The sequence spans 376 residues: MKIPAALVFIPVGVLFLISGLIVNIIQLVFFIIVRPFSRSLYRRINKNVAELLWLQLIWLFDWWACIKINLYVDAETLELIGKEHALVLSNHRSDIDWLIGWVMAQRVGCLGSSLAIMKKEAKYLPIIGWSMWFSDYIFLERSWAKDENTLKAGFKRLEDFPMTFWLALFVEGTRFTQEKLEAAQEYASIRSLPSPRNVLIPRTKGFVSAVSEIRSFVPAIYDCTLTVHNNQPTPTLLRMFSGQSSEINLQMRRHKMSELPETDDGIAQWCQDLFITKDAQLEKYFTKDVFSDLEVHQINRPIKPLIVVIIWLGFLVFGGFKLLQWLSIVASWKIILLFVFFLVIATITMQILIQSSESQRSTPAKRPLQEQLISA.

2 helical membrane passes run 14 to 34 and 49 to 69; these read VLFL…FIIV and VAEL…CIKI. The short motif at 92 to 97 is the HXXXXD motif element; that stretch reads HRSDID. Transmembrane regions (helical) follow at residues 98 to 118, 306 to 326, and 335 to 355; these read WLIG…LAIM, LIVV…LLQW, and IILL…ILIQ.

It belongs to the 1-acyl-sn-glycerol-3-phosphate acyltransferase family. Predominantly expressed in pollen.

It is found in the membrane. The enzyme catalyses a 1-acyl-sn-glycero-3-phosphate + an acyl-CoA = a 1,2-diacyl-sn-glycero-3-phosphate + CoA. Its pathway is phospholipid metabolism; CDP-diacylglycerol biosynthesis; CDP-diacylglycerol from sn-glycerol 3-phosphate: step 2/3. Converts lysophosphatidic acid (LPA) into phosphatidic acid by incorporating acyl moiety at the 2 position. Has preference for C-18-CoA substrates compared to C-16-CoA substrates. This Arabidopsis thaliana (Mouse-ear cress) protein is 1-acyl-sn-glycerol-3-phosphate acyltransferase 3 (LPAT3).